The sequence spans 215 residues: MPGEATDTVPATEQELPQPQAETGSGTESDSDESVPELEEQDSTQATTQQAQLAAAAEIDEEPVSKAKQSRSEKKARKAMSKLGLRQVTGVTRVTIRKSKNILFVITKPDVYKSPASDTYIVFGEAKIEDLSQQAQLAAAEKFKVQGEAVSNIQENTQTPTVQEESEEEEVDETGVEVKDIELVMSQANVSRAKAVRALKNNSNDIVNAIMELTM.

The tract at residues 1–81 (MPGEATDTVP…SEKKARKAMS (81 aa)) is disordered. Positions 9–28 (VPATEQELPQPQAETGSGTE) are enriched in polar residues. Residues 29–42 (SDSDESVPELEEQD) show a composition bias toward acidic residues. Ser-43 carries the post-translational modification Phosphoserine; by ILK1. A compositionally biased stretch (low complexity) spans 44–57 (TQATTQQAQLAAAA). Residues 69–80 (QSRSEKKARKAM) form a required for DNA-binding region. An NAC-A/B domain is found at 70 to 135 (SRSEKKARKA…AKIEDLSQQA (66 aa)). The interval 93–108 (RVTIRKSKNILFVITK) is RNA/DNA-binding. Ser-132 is subject to Phosphoserine. An N6-acetyllysine; alternate modification is found at Lys-142. Lys-142 participates in a covalent cross-link: Glycyl lysine isopeptide (Lys-Gly) (interchain with G-Cter in SUMO2); alternate. Residue Thr-159 is modified to Phosphothreonine; by GSK3-beta. Thr-161 carries the post-translational modification Phosphothreonine. Phosphoserine occurs at positions 166, 186, 191, and 203. Positions 176-213 (VEVKDIELVMSQANVSRAKAVRALKNNSNDIVNAIMEL) constitute a UBA domain.

This sequence belongs to the NAC-alpha family. In terms of assembly, part of the nascent polypeptide-associated complex (NAC), which is a heterodimer of NACA and BTF3 (via NAC-A/B domains). NAC associates with ribosomes through the BTF3/NACB subunit and contacts the ribosomal protein L23, which is positioned near the exiting site. Both subunits can contact nascent polypeptide chains. NACA may also form homodimers, and only this form binds DNA. Interacts with TBP and JUN. In terms of processing, phosphorylation of Ser-43 by ILK during cell adhesion may promote nuclear localization. Phosphorylation of Thr-159 by GSK3B may promote proteasome mediated degradation.

It localises to the cytoplasm. It is found in the nucleus. In terms of biological role, prevents inappropriate targeting of non-secretory polypeptides to the endoplasmic reticulum (ER). Binds to nascent polypeptide chains as they emerge from the ribosome and blocks their interaction with the signal recognition particle (SRP), which normally targets nascent secretory peptides to the ER. Also reduces the inherent affinity of ribosomes for protein translocation sites in the ER membrane (M sites). May act as a specific coactivator for JUN, binding to DNA and stabilizing the interaction of JUN homodimers with target gene promoters. This Bos taurus (Bovine) protein is Nascent polypeptide-associated complex subunit alpha (NACA).